A 111-amino-acid polypeptide reads, in one-letter code: Aquaporin-2 (111 aa).

The Cytoplasmic portion of the chain corresponds to 1–6 (SIAFSR). A helical membrane pass occupies residues 7–27 (AVFSEFLATLLFVFFGLGSAL). Residues 28–37 (NWPSTVPIPT) lie on the Extracellular side of the membrane. The helical transmembrane segment at 38-56 (VLQISMAFGLAIGTLVQTL) threads the bilayer. At 57–61 (GHISG) the chain is on the cytoplasmic side. An intramembrane region (discontinuously helical) is located at residues 62–71 (AHINPAVTVA). Residues 65 to 67 (NPA) carry the NPA 1 motif. Topologically, residues 72–82 (CLVGCHVSFLR) are cytoplasmic. The helical transmembrane segment at 83–104 (ATFYVAAQLLGAVAGAALLHKL) threads the bilayer. Residues 105-111 (TPEDIRG) lie on the Extracellular side of the membrane.

It belongs to the MIP/aquaporin (TC 1.A.8) family. As to quaternary structure, homotetramer. In terms of processing, serine phosphorylation is necessary and sufficient for expression at the apical membrane. Endocytosis is not phosphorylation-dependent. N-glycosylated.

The protein resides in the apical cell membrane. Its subcellular location is the basolateral cell membrane. It localises to the cell membrane. The protein localises to the cytoplasmic vesicle membrane. It is found in the golgi apparatus. The protein resides in the trans-Golgi network membrane. The enzyme catalyses H2O(in) = H2O(out). It carries out the reaction glycerol(in) = glycerol(out). Its function is as follows. Forms a water-specific channel that provides the plasma membranes of renal collecting duct with high permeability to water, thereby permitting water to move in the direction of an osmotic gradient. Plays an essential role in renal water homeostasis. Could also be permeable to glycerol. The protein is Aquaporin-2 of Macroscelides proboscideus (Short-eared elephant shrew).